The following is a 306-amino-acid chain: D-alanine--D-alanine ligase (306 aa).

One can recognise an ATP-grasp domain in the interval Lys-102–Glu-300. Pro-128 to Thr-183 lines the ATP pocket. Asp-253, Glu-267, and Asn-269 together coordinate Mg(2+).

This sequence belongs to the D-alanine--D-alanine ligase family. The cofactor is Mg(2+). Requires Mn(2+) as cofactor.

It is found in the cytoplasm. It carries out the reaction 2 D-alanine + ATP = D-alanyl-D-alanine + ADP + phosphate + H(+). It participates in cell wall biogenesis; peptidoglycan biosynthesis. Its function is as follows. Cell wall formation. In Bartonella bacilliformis (strain ATCC 35685 / KC583 / Herrer 020/F12,63), this protein is D-alanine--D-alanine ligase.